We begin with the raw amino-acid sequence, 236 residues long: Orotidine 5'-phosphate decarboxylase (236 aa).

Substrate is bound by residues Asp16, Lys38, 65-74 (DLKLHDIGNT), Thr123, Arg184, Gln193, Gly213, and Arg214. Lys67 acts as the Proton donor in catalysis.

The protein belongs to the OMP decarboxylase family. Type 1 subfamily. Homodimer.

It carries out the reaction orotidine 5'-phosphate + H(+) = UMP + CO2. The protein operates within pyrimidine metabolism; UMP biosynthesis via de novo pathway; UMP from orotate: step 2/2. In terms of biological role, catalyzes the decarboxylation of orotidine 5'-monophosphate (OMP) to uridine 5'-monophosphate (UMP). The chain is Orotidine 5'-phosphate decarboxylase from Methylobacterium sp. (strain 4-46).